Here is a 365-residue protein sequence, read N- to C-terminus: N-acetylgalactosamine-N,N'-diacetylbacillosaminyl-diphospho-undecaprenol 4-alpha-N-acetylgalactosaminyltransferase (365 aa).

This sequence belongs to the glycosyltransferase group 1 family.

It is found in the cell inner membrane. The catalysed reaction is N-acetyl-alpha-D-galactosaminyl-(1-&gt;3)-N,N'-diacetyl-alpha-D-bacillosaminyl-tri-trans,hepta-cis-undecaprenyl diphosphate + UDP-N-acetyl-alpha-D-galactosamine = N-acetyl-alpha-D-galactosaminyl-(1-&gt;4)-N-acetyl-alpha-D-galactosaminyl-(1-&gt;3)-N,N'-diacetyl-alpha-D-bacillosaminyl-tri-trans,heptacis-undecaprenyl diphosphate + UDP + H(+). It functions in the pathway protein modification; protein glycosylation. In terms of biological role, adds a GalNAc residue on to the Und-PP-Bac2,4diNAc-GalNAc disaccharide in the N-linked protein glycosylation pathway. Transfers the third sugar in the heptasaccharide biosynthesis. The protein is N-acetylgalactosamine-N,N'-diacetylbacillosaminyl-diphospho-undecaprenol 4-alpha-N-acetylgalactosaminyltransferase (pglJ) of Campylobacter jejuni subsp. jejuni serotype O:2 (strain ATCC 700819 / NCTC 11168).